A 268-amino-acid chain; its full sequence is 4-diphosphocytidyl-2-C-methyl-D-erythritol kinase (268 aa).

Residue Lys-9 is part of the active site. 88-98 (PPGAGLGGGSS) contributes to the ATP binding site. Asp-130 is a catalytic residue.

Belongs to the GHMP kinase family. IspE subfamily.

It carries out the reaction 4-CDP-2-C-methyl-D-erythritol + ATP = 4-CDP-2-C-methyl-D-erythritol 2-phosphate + ADP + H(+). It participates in isoprenoid biosynthesis; isopentenyl diphosphate biosynthesis via DXP pathway; isopentenyl diphosphate from 1-deoxy-D-xylulose 5-phosphate: step 3/6. Functionally, catalyzes the phosphorylation of the position 2 hydroxy group of 4-diphosphocytidyl-2C-methyl-D-erythritol. This Aquifex aeolicus (strain VF5) protein is 4-diphosphocytidyl-2-C-methyl-D-erythritol kinase.